The sequence spans 106 residues: Large ribosomal subunit protein uL24 (106 aa).

It belongs to the universal ribosomal protein uL24 family. As to quaternary structure, part of the 50S ribosomal subunit.

One of two assembly initiator proteins, it binds directly to the 5'-end of the 23S rRNA, where it nucleates assembly of the 50S subunit. In terms of biological role, one of the proteins that surrounds the polypeptide exit tunnel on the outside of the subunit. This Verminephrobacter eiseniae (strain EF01-2) protein is Large ribosomal subunit protein uL24.